Here is an 84-residue protein sequence, read N- to C-terminus: Beta-cardiotoxin CTX21 (84 aa).

Residues 1–21 form the signal peptide; it reads MKTLLLTLVVVTIVCLDLGYT. Cystine bridges form between Cys-24-Cys-43, Cys-36-Cys-61, Cys-65-Cys-76, and Cys-77-Cys-82.

It belongs to the three-finger toxin family. Short-chain subfamily. Aminergic toxin sub-subfamily. Expressed by the venom gland.

The protein resides in the secreted. Acts as a beta-blocker by binding to beta-1 and beta-2 adrenergic receptors (ADRB1 and ADRB2). It dose-dependently decreases the heart rate (bradycardia), whereas conventional cardiotoxins increases it. At 100 mg/kg, intraperitoneal injection into mice provokes labored breathing, impaired locomotion, lack of response to external stimuli, and death (after 30 minutes). The sequence is that of Beta-cardiotoxin CTX21 from Ophiophagus hannah (King cobra).